The following is a 518-amino-acid chain: MAGGAVVSTGAGKDYPGKLTLFVFFTCVVAATGGLIFGYDIGISGGVTSMDPFLRKFFPEVYRKKQMADKNNQYCKYDNQLLQTFTSSLYLAALVSSFFAATVTRVLGRKWSMFAGGLTFLIGAALNGAAENVAMLIVGRILLGVGVGFANQSVPVYLSEMAPARLRGMLNIGFQLMITIGILAAELINYGTAKIKAGWGWRVSLALAAVPAAIITLGSLFLPDTPNSLIDRGHPEAAERMLRRIRGSDVDVSEEYADLVAASEESKLVQHPWRNILRRKYRAQLTMAICIPFFQQLTGINVIMFYAPVLFDTLGFKSDASLMSAVITGLVNVFATLVSIFTVDRLGRRKLFLQGGAQMVVCQVVVGTLIAVKFGTSGIGDIPKGYAAVVVLFICMYVAGFAWSWGPLGWLVPSEIFPLEIRPAGQSINVSVNMLFTFVIAQAFLTMLCHMKFGLFYFFAGWVVIMTVFIALFLPETKNVPIEEMVLVWKSHWFWRRFIGDHDVHVGANHVSNNKLQP.

The Cytoplasmic segment spans residues 1–18 (MAGGAVVSTGAGKDYPGK). A helical membrane pass occupies residues 19–39 (LTLFVFFTCVVAATGGLIFGY). The Extracellular segment spans residues 40–80 (DIGISGGVTSMDPFLRKFFPEVYRKKQMADKNNQYCKYDNQ). Residues 81-101 (LLQTFTSSLYLAALVSSFFAA) traverse the membrane as a helical segment. The Cytoplasmic portion of the chain corresponds to 102-117 (TVTRVLGRKWSMFAGG). The helical transmembrane segment at 118-138 (LTFLIGAALNGAAENVAMLIV) threads the bilayer. Topologically, residues 139 to 140 (GR) are extracellular. Residues 141-161 (ILLGVGVGFANQSVPVYLSEM) traverse the membrane as a helical segment. The Cytoplasmic segment spans residues 162–167 (APARLR). A helical membrane pass occupies residues 168 to 188 (GMLNIGFQLMITIGILAAELI). The Extracellular portion of the chain corresponds to 189 to 202 (NYGTAKIKAGWGWR). Residues 203-223 (VSLALAAVPAAIITLGSLFLP) traverse the membrane as a helical segment. Residues 224–290 (DTPNSLIDRG…YRAQLTMAIC (67 aa)) are Cytoplasmic-facing. A helical transmembrane segment spans residues 291–311 (IPFFQQLTGINVIMFYAPVLF). The Extracellular segment spans residues 312 to 322 (DTLGFKSDASL). The chain crosses the membrane as a helical span at residues 323–343 (MSAVITGLVNVFATLVSIFTV). The Cytoplasmic portion of the chain corresponds to 344–351 (DRLGRRKL). A helical transmembrane segment spans residues 352-372 (FLQGGAQMVVCQVVVGTLIAV). Residues 373-387 (KFGTSGIGDIPKGYA) lie on the Extracellular side of the membrane. Residues 388–408 (AVVVLFICMYVAGFAWSWGPL) traverse the membrane as a helical segment. Residues 409–427 (GWLVPSEIFPLEIRPAGQS) are Cytoplasmic-facing. Residues 428–448 (INVSVNMLFTFVIAQAFLTML) traverse the membrane as a helical segment. Topologically, residues 449-452 (CHMK) are extracellular. Residues 453–473 (FGLFYFFAGWVVIMTVFIALF) traverse the membrane as a helical segment. Residues 474–518 (LPETKNVPIEEMVLVWKSHWFWRRFIGDHDVHVGANHVSNNKLQP) lie on the Cytoplasmic side of the membrane.

The protein belongs to the major facilitator superfamily. Sugar transporter (TC 2.A.1.1) family. As to expression, highly expressed in roots. Expressed in xylem and sclerenchyma cells of roots. Expressed at low levels in leaves.

It localises to the membrane. In terms of biological role, mediates active uptake of hexoses by sugar:proton symport. Can transport glucose, xylose and 3-O-methylglucose. May be involved in the accumulation of monosaccharides required for cell wall synthesis during root development. This chain is Sugar transport protein MST3, found in Oryza sativa subsp. japonica (Rice).